Consider the following 492-residue polypeptide: uncharacterized protein (492 aa).

This sequence belongs to the FGGY kinase family.

This is an uncharacterized protein from Escherichia coli (strain K12).